A 310-amino-acid polypeptide reads, in one-letter code: Tagatose-6-phosphate kinase (310 aa).

Belongs to the carbohydrate kinase PfkB family. LacC subfamily.

The enzyme catalyses D-tagatofuranose 6-phosphate + ATP = D-tagatofuranose 1,6-bisphosphate + ADP + H(+). It participates in carbohydrate metabolism; D-tagatose 6-phosphate degradation; D-glyceraldehyde 3-phosphate and glycerone phosphate from D-tagatose 6-phosphate: step 1/2. The chain is Tagatose-6-phosphate kinase from Streptococcus agalactiae serotype Ia (strain ATCC 27591 / A909 / CDC SS700).